We begin with the raw amino-acid sequence, 113 residues long: Large ribosomal subunit protein uL24 (113 aa).

This sequence belongs to the universal ribosomal protein uL24 family. As to quaternary structure, part of the 50S ribosomal subunit.

In terms of biological role, one of two assembly initiator proteins, it binds directly to the 5'-end of the 23S rRNA, where it nucleates assembly of the 50S subunit. Functionally, one of the proteins that surrounds the polypeptide exit tunnel on the outside of the subunit. This chain is Large ribosomal subunit protein uL24, found in Micrococcus luteus (strain ATCC 4698 / DSM 20030 / JCM 1464 / CCM 169 / CCUG 5858 / IAM 1056 / NBRC 3333 / NCIMB 9278 / NCTC 2665 / VKM Ac-2230) (Micrococcus lysodeikticus).